Here is a 101-residue protein sequence, read N- to C-terminus: Urease subunit beta (101 aa).

It belongs to the urease beta subunit family. Heterotrimer of UreA (gamma), UreB (beta) and UreC (alpha) subunits. Three heterotrimers associate to form the active enzyme.

The protein localises to the cytoplasm. The enzyme catalyses urea + 2 H2O + H(+) = hydrogencarbonate + 2 NH4(+). It functions in the pathway nitrogen metabolism; urea degradation; CO(2) and NH(3) from urea (urease route): step 1/1. This chain is Urease subunit beta, found in Pseudomonas fluorescens (strain SBW25).